Here is a 417-residue protein sequence, read N- to C-terminus: Exodeoxyribonuclease 7 large subunit (417 aa).

Belongs to the XseA family. In terms of assembly, heterooligomer composed of large and small subunits.

Its subcellular location is the cytoplasm. The catalysed reaction is Exonucleolytic cleavage in either 5'- to 3'- or 3'- to 5'-direction to yield nucleoside 5'-phosphates.. Its function is as follows. Bidirectionally degrades single-stranded DNA into large acid-insoluble oligonucleotides, which are then degraded further into small acid-soluble oligonucleotides. The polypeptide is Exodeoxyribonuclease 7 large subunit (Lactococcus lactis subsp. lactis (strain IL1403) (Streptococcus lactis)).